The sequence spans 584 residues: Pentalenolactone D synthase (584 aa).

FAD contacts are provided by residues 55–56, 77–78, 85–86, 97–98, tyrosine 103, valine 147, and methionine 486; these read IG, DG, TW, and DV.

The protein belongs to the FAD-binding monooxygenase family. The cofactor is FAD.

The catalysed reaction is 1-deoxy-11-oxopentalenate + NADPH + O2 + H(+) = pentalenolactone D + NADP(+) + H2O. It participates in antibiotic biosynthesis; pentalenolactone biosynthesis. In terms of biological role, catalyzes the flavin-dependent Baeyer-Villiger oxidation of 1-deoxy-11-oxopentalenic acid to pentalenolactone D in the biosynthesis of pentalenolactone antibiotic. This is Pentalenolactone D synthase (penE) from Streptomyces exfoliatus (Streptomyces hydrogenans).